The primary structure comprises 397 residues: Ethanolaminephosphotransferase 1 (397 aa).

N-acetylalanine is present on A2. Helical transmembrane passes span 47 to 69 (WLAPNLITFSGFLLVVFNFLLMA), 84 to 103 (HVPDWVWIVVGILNFVAYTL), 123 to 145 (LFDHGLDNWSYVYFVVTVYSIFG), 150 to 172 (GVSVFVLYLLLWVVLFSFILSHW), 179 to 201 (ILFLPWGYDISQVTISFVYIVTA), 221 to 243 (LFTAMIIGCALCVTLPMSLLNFF), 256 to 278 (VYEAMVPLFSPCLLFILSTAWIL), 291 to 310 (VFYFMVGTAFANSTCQLIVC), 317 to 339 (CPTLNWLLVPLFLVVLVVNLGVA), and 344 to 366 (SILLYTLTTAFTLAHIHYGVRVV). U387 is a non-standard amino acid (selenocysteine).

This sequence belongs to the CDP-alcohol phosphatidyltransferase class-I family. It depends on Mg(2+) as a cofactor. Mn(2+) serves as cofactor.

Its subcellular location is the endoplasmic reticulum membrane. It catalyses the reaction CDP-ethanolamine + a 1,2-diacyl-sn-glycerol = a 1,2-diacyl-sn-glycero-3-phosphoethanolamine + CMP + H(+). The enzyme catalyses 1-O-alkyl-2-acyl-sn-glycerol + CDP-ethanolamine = a 1-O-alkyl-2-acyl-sn-glycero-3-phosphoethanolamine + CMP + H(+). It functions in the pathway phospholipid metabolism; phosphatidylethanolamine biosynthesis; phosphatidylethanolamine from ethanolamine: step 3/3. Functionally, ethanolaminephosphotransferase that catalyzes the transfer of phosphoethanolamine (PE) from CDP-ethanolamine to lipid acceptors, the final step in the synthesis of PE via the 'Kennedy' pathway. PE is the second most abundant phospholipid of membranes in mammals and is involved in various membrane-related cellular processes. The enzyme is critical for the synthesis of several PE species and also catalyzes the synthesis of plasmanyl-PE, a lipid required for proper myelination and neurodevelopment, from 1-alkyl-2-acylglycerol. This is Ethanolaminephosphotransferase 1 from Pongo abelii (Sumatran orangutan).